A 749-amino-acid polypeptide reads, in one-letter code: Chaperone protein DnaK 1 (749 aa).

The residue at position 198 (Thr198) is a Phosphothreonine; by autocatalysis. Basic and acidic residues-rich tracts occupy residues 643 to 653 (RWDADPWDRSR), 661 to 694 (YDDRRSPVSDPYRGERWVEEQTSMSRREPVRDRN), and 711 to 724 (PTWEEDQPPRRDRS). The disordered stretch occupies residues 643–749 (RWDADPWDRS…GWDDDDDEWF (107 aa)). Over residues 740–749 (GWDDDDDEWF) the composition is skewed to acidic residues.

Belongs to the heat shock protein 70 family.

Acts as a chaperone. This chain is Chaperone protein DnaK 1, found in Synechococcus sp. (strain ATCC 27144 / PCC 6301 / SAUG 1402/1) (Anacystis nidulans).